Here is an 828-residue protein sequence, read N- to C-terminus: Neurotrophin receptor-interacting factor 1 (828 aa).

Positions 14–85 (VKFEDVSLTF…QREIPQDTLP (72 aa)) constitute a KRAB 1 domain. Lys15 is covalently cross-linked (Glycyl lysine isopeptide (Lys-Gly) (interchain with G-Cter in ubiquitin)). Residues 158–240 (RQKFRHFQYE…ALLENMTSVS (83 aa)) form the SCAN box domain. The KRAB 2 domain occupies 280–370 (VTFQDVAVDF…ESILEDGVKE (91 aa)). Disordered regions lie at residues 328–355 (RELT…RNGT), 377–490 (NQVG…DPIT), and 575–611 (QKGY…LSTS). A compositionally biased stretch (polar residues) spans 345–355 (PNTNDLSRNGT). A compositionally biased stretch (basic and acidic residues) spans 384 to 394 (EKGHPQKKFSE). The span at 418–433 (KYVKVKQKGTGKRKGR) shows a compositional bias: basic residues. A compositionally biased stretch (polar residues) spans 458 to 478 (RSGSTPVTHGSSIKKQQQGSE). The segment covering 589-599 (SWKHIKPHQKG) has biased composition (basic residues). Residues 600-611 (SKGERVEELSTS) are compositionally biased toward basic and acidic residues. 5 C2H2-type zinc fingers span residues 684–706 (CRCS…KKIH), 712–734 (YMCM…LRIH), 740–762 (FECS…LRTH), 768–790 (YHCE…ERTH), and 796–818 (YVCI…QKTH).

This sequence belongs to the krueppel C2H2-type zinc-finger protein family. Interacts with NGFR/p75(NTR). Interacts (via KRAB 1 domain) with TRAF6. Interacts (when ubiquitinated at Lys-15) with SQSTM1/p62. In terms of processing, ubiquitinated by TRAF6 at Lys-15 through 'Lys-63'-linked polyubiquitination. 'Lys-63'-linked polyubiquitination occurs in response to NGFR/p75(NTR) cleavage by gamma-secretase and promotes binding with the ICD cleavage product of NGFR/p75(NTR), followed by translocation into the nucleus and subsequent apoptosis. Ubiquitously expressed at low level. Expressed at higher level in testis.

Its subcellular location is the cytoplasm. It is found in the nucleus. Functionally, transcription regulator involved in NGFR/p75(NTR)-mediated apoptosis. Essential component of the NGFR/p75(NTR) apoptotic pathway: upon ligand-binding and subsequent cleavage of NGFR/p75(NTR), binds to the intracellular domain (ICD) cleavage product of NGFR/p75(NTR), translocates to the nucleus and induces apoptosis, possibly by regulating expression of key regulators of apoptosis. Induces NGFR/p75(NTR)-mediated apoptosis in retina and sympathetic neurons. May also regulate expression of neuronal cholesterol biosynthesis genes. Probably acts as a transcription repressor: specifically binds to the 3'-end of zinc-finger coding genes and recruiting chromatin-modifying proteins such as SETDB1 and TRIM28/KAP1, leading to transcription repression. The protein is Neurotrophin receptor-interacting factor 1 (Nrif1) of Mus musculus (Mouse).